Reading from the N-terminus, the 220-residue chain is Probable acrEF/envCD operon repressor (220 aa).

Positions 10-70 constitute an HTH tetR-type domain; it reads LKTRQELIET…EMWLQQPSLR (61 aa). Positions 33–52 form a DNA-binding region, H-T-H motif; it reads TLNDIADAANVTRGAIYWHF.

Its function is as follows. Potential regulator protein for the acrEF/envCD genes. The sequence is that of Probable acrEF/envCD operon repressor (envR) from Escherichia coli O157:H7.